Consider the following 990-residue polypeptide: Aconitate hydratase 3, mitochondrial (990 aa).

A mitochondrion-targeting transit peptide spans 1–78; the sequence is MYLTASSSAS…PFRFTSQIRA (78 aa). A Phosphoserine modification is found at serine 91. Substrate contacts are provided by residues glutamine 182 and 301 to 303; that span reads DSH. [4Fe-4S] cluster-binding residues include cysteine 533, cysteine 599, and cysteine 602. Residues arginine 632, arginine 637, arginine 795, and 876–877 each bind substrate; that span reads SR.

Belongs to the aconitase/IPM isomerase family. Monomer. Interacts with B'GAMMA in the cytosol. It depends on [4Fe-4S] cluster as a cofactor. In terms of processing, phosphorylated at Ser-91 in the cytoplasm; this phosphorylation requires the presence of B'GAMMA. As to expression, major aconitase isoenzyme in young seedlings. Expressed in roots, leaves, stems and flowers, and, at low levels, in seeds.

Its subcellular location is the mitochondrion. It localises to the cytoplasm. It catalyses the reaction citrate = D-threo-isocitrate. It participates in carbohydrate metabolism; tricarboxylic acid cycle; isocitrate from oxaloacetate: step 2/2. Catalyzes the isomerization of citrate to isocitrate via cis-aconitate. Contributes to oxidative stress tolerance. Modulates cytosolic citrate metabolism during lipid mobilization. Required during seedling growth. The sequence is that of Aconitate hydratase 3, mitochondrial from Arabidopsis thaliana (Mouse-ear cress).